A 479-amino-acid chain; its full sequence is Acyltransferase easC (479 aa).

The Proton acceptor role is filled by His161.

This sequence belongs to the plant acyltransferase family. In terms of assembly, monomer.

The protein operates within antibiotic biosynthesis. Its function is as follows. Acyltransferase; part of the gene cluster that mediates the biosynthesis of emericellamides, secondary metabolites acting as antibiotics. The biosynthesis of emericellamides initiates from the highly reducing polyketide synthase easB which catalyzes the formation of the linear polyketide chain. EasB produces several polyketides that can be further processed by the downstream enzymes. The polyketides are released from easB as linear polyketide carboxylic acids, which are converted to CoA thioesters by the acyl-CoA ligase easD. The substrates are then loaded onto the acyltransferase easC, which shuttles them to the first thiolation (T) domain of the nonribosomal peptide synthetase easA. EasA then performs condensation of the polyketides with one glycine, two alanine, one valine and one leucine residues. A last step of cyclization leads to the production of emericellamides. This chain is Acyltransferase easC, found in Emericella nidulans (strain FGSC A4 / ATCC 38163 / CBS 112.46 / NRRL 194 / M139) (Aspergillus nidulans).